The primary structure comprises 342 residues: MERYEVMRDIGSGNFGVAKLVRDVATNHLFAVKFIERGLKIDEHVQREIMNHRSLKHPNIIRFKEVVLTPTHLAIVMEYAAGGELFERICNAGRFSEDEARFFFQQLISGVSYCHSMQVCHRDLKLENTLLDGSVTPRLKICDFGYSKSSVLHSQPKSTVGTPAYIAPEVLSRKEYDGKVADVWSCGVTLYVMLVGAYPFEDPDDPRNFRKTITRILSVQYSIPDYVRVSADCRHLLSRIFVGNPEQRITIPEIKNHPWFLKNLPIEMTDEYQRSMQLADMNTPSQSLEEVMAIIQEARKPGDAMKLAGAGQVACLGSMDLDDIDDIDDIDIENSGDFVCAL.

A Protein kinase domain is found at Tyr4 to Phe260. ATP-binding positions include Ile10–Ala18 and Lys33. Catalysis depends on Asp123, which acts as the Proton acceptor. Positions Glu253–Leu342 are C-terminal.

This sequence belongs to the protein kinase superfamily. Ser/Thr protein kinase family. Post-translationally, phosphorylated. As to expression, expressed in leaf blades, leaf sheaths and roots. Expressed in shoots and roots of young seedlings.

The enzyme catalyses L-seryl-[protein] + ATP = O-phospho-L-seryl-[protein] + ADP + H(+). It carries out the reaction L-threonyl-[protein] + ATP = O-phospho-L-threonyl-[protein] + ADP + H(+). Activated by phosphorylation in response to hyperosmotic stress within 5 minutes. In terms of biological role, may play a role in signal transduction of hyperosmotic response. The chain is Serine/threonine-protein kinase SAPK1 (SAPK1) from Oryza sativa subsp. japonica (Rice).